A 673-amino-acid chain; its full sequence is DNA ligase (673 aa).

NAD(+)-binding positions include 36-40 (DSEYD), 85-86 (SL), and Glu118. Catalysis depends on Lys120, which acts as the N6-AMP-lysine intermediate. Positions 141, 178, 295, and 319 each coordinate NAD(+). Residues Cys413, Cys416, Cys431, and Cys437 each coordinate Zn(2+). The BRCT domain maps to 596-673 (VRDNPLKGKT…SENEFLALLA (78 aa)).

This sequence belongs to the NAD-dependent DNA ligase family. LigA subfamily. Mg(2+) serves as cofactor. It depends on Mn(2+) as a cofactor.

The catalysed reaction is NAD(+) + (deoxyribonucleotide)n-3'-hydroxyl + 5'-phospho-(deoxyribonucleotide)m = (deoxyribonucleotide)n+m + AMP + beta-nicotinamide D-nucleotide.. Functionally, DNA ligase that catalyzes the formation of phosphodiester linkages between 5'-phosphoryl and 3'-hydroxyl groups in double-stranded DNA using NAD as a coenzyme and as the energy source for the reaction. It is essential for DNA replication and repair of damaged DNA. The protein is DNA ligase of Histophilus somni (strain 129Pt) (Haemophilus somnus).